We begin with the raw amino-acid sequence, 832 residues long: Serine/threonine-protein kinase Doa (832 aa).

Disordered stretches follow at residues 1-86 (MVAA…SKYI), 135-158 (LLQHQQQQHHQQQQQQHQEQQQYP), 179-215 (SDPFMQQQHMPAHQQQQHLPHKLQQSYSSSHVPKQAP), and 258-419 (SKIG…QLQQ). The segment covering 8–18 (VPTSSSSSAAT) has biased composition (polar residues). Over residues 20–32 (RQKDVDNKLEKCL) the composition is skewed to basic and acidic residues. Low complexity-rich tracts occupy residues 40-53 (TSSNNNSTSNSNNN), 137-158 (QHQQQQHHQQQQQQHQEQQQYP), and 183-203 (MQQQHMPAHQQQQHLPHKLQQ). Over residues 271 to 282 (HSASFSSAQRPT) the composition is skewed to polar residues. Composition is skewed to low complexity over residues 285-310 (QFHQQHQQQQHLQQQQQHPQQQQHQH), 347-365 (QMQPVKYQQQQQHPHTQFQ), and 396-419 (SSSSNKQPQQPQQQQQQQQSQLQQ). Residues 479–799 (YKIMATLGEG…LGEALHHPFF (321 aa)) enclose the Protein kinase domain. ATP contacts are provided by residues 485 to 493 (LGEGTFGRV) and Lys-508. Asp-605 serves as the catalytic Proton acceptor. The disordered stretch occupies residues 809–832 (GEVSNKQPLSSGSSSRERSHSLSR). The segment covering 823–832 (SRERSHSLSR) has biased composition (basic and acidic residues).

Belongs to the protein kinase superfamily. CMGC Ser/Thr protein kinase family. Lammer subfamily. In terms of assembly, interacts (via N-terminus) with x16 (via Arg/Ser-rich region). Interacts with eEF1gamma (via C-terminus); the interaction is probably direct, is transient and leads to phosphorylation of eEF1gamma by Doa. Requires Mg(2+) as cofactor. Post-translationally, autophosphorylated on serine, threonine and tyrosine residues. As to expression, ubiquitous expression in embryos. Stage 17 embryos show elevated expression in CNS and brain. Ubiquitous expression in larval imaginal disks. Increased expression posterior to the eye-antennal disk morphogenetic furrow.

It localises to the cytoplasm. The protein localises to the cytosol. It is found in the nucleus. The catalysed reaction is L-seryl-[protein] + ATP = O-phospho-L-seryl-[protein] + ADP + H(+). It catalyses the reaction L-threonyl-[protein] + ATP = O-phospho-L-threonyl-[protein] + ADP + H(+). The enzyme catalyses L-tyrosyl-[protein] + ATP = O-phospho-L-tyrosyl-[protein] + ADP + H(+). In terms of biological role, dual specificity kinase involved in the negative regulation of microtubule-based transport through phsophorylation of the microtuble-binding protein eEF1gamma. May function in the control of alternative splicing by phosphorylating serine/arginine-rich splicing factors, the SR proteins, including x16. Negative regulator of the copia retrotransposon element of the white (w) gene. In the eye, it is required for normal pigmentation, photoreceptor cell development and for organization of interommatidial bristles. Also essential for embryonic segmentation and differentiation of the nervous system. Its function is as follows. May be the specific isoform involved in regulation of microtubule-based transport through phosphorylation of the microtubule binding protein eEF1gamma. This Drosophila melanogaster (Fruit fly) protein is Serine/threonine-protein kinase Doa.